Consider the following 396-residue polypeptide: 1-deoxy-D-xylulose 5-phosphate reductoisomerase (396 aa).

The NADPH site is built by T10, G11, S12, I13, and N123. K124 contributes to the 1-deoxy-D-xylulose 5-phosphate binding site. NADPH is bound at residue E125. Position 149 (D149) interacts with Mn(2+). S150, E151, S185, and H208 together coordinate 1-deoxy-D-xylulose 5-phosphate. E151 lines the Mn(2+) pocket. G214 contributes to the NADPH binding site. S221, N226, K227, and E230 together coordinate 1-deoxy-D-xylulose 5-phosphate. Mn(2+) is bound at residue E230.

Belongs to the DXR family. It depends on Mg(2+) as a cofactor. Mn(2+) serves as cofactor.

The catalysed reaction is 2-C-methyl-D-erythritol 4-phosphate + NADP(+) = 1-deoxy-D-xylulose 5-phosphate + NADPH + H(+). It participates in isoprenoid biosynthesis; isopentenyl diphosphate biosynthesis via DXP pathway; isopentenyl diphosphate from 1-deoxy-D-xylulose 5-phosphate: step 1/6. Catalyzes the NADPH-dependent rearrangement and reduction of 1-deoxy-D-xylulose-5-phosphate (DXP) to 2-C-methyl-D-erythritol 4-phosphate (MEP). This is 1-deoxy-D-xylulose 5-phosphate reductoisomerase from Shewanella sp. (strain ANA-3).